The primary structure comprises 427 residues: UPF0229 protein YeaH (427 aa).

Residues 79–90 (NDHFVQNDRIER) show a composition bias toward basic and acidic residues. A disordered region spans residues 79 to 110 (NDHFVQNDRIERPQGGGGGSGSGQGQASQDGE). Over residues 92-102 (QGGGGGSGSGQ) the composition is skewed to gly residues.

The protein belongs to the UPF0229 family.

This chain is UPF0229 protein YeaH, found in Escherichia coli O139:H28 (strain E24377A / ETEC).